The chain runs to 202 residues: Nucleoside triphosphate pyrophosphatase (202 aa).

The active-site Proton acceptor is D79.

It belongs to the Maf family. Requires a divalent metal cation as cofactor.

The protein localises to the cytoplasm. The enzyme catalyses a ribonucleoside 5'-triphosphate + H2O = a ribonucleoside 5'-phosphate + diphosphate + H(+). It carries out the reaction a 2'-deoxyribonucleoside 5'-triphosphate + H2O = a 2'-deoxyribonucleoside 5'-phosphate + diphosphate + H(+). In terms of biological role, nucleoside triphosphate pyrophosphatase. May have a dual role in cell division arrest and in preventing the incorporation of modified nucleotides into cellular nucleic acids. In Rhodopseudomonas palustris (strain HaA2), this protein is Nucleoside triphosphate pyrophosphatase.